Here is a 181-residue protein sequence, read N- to C-terminus: 6,7-dimethyl-8-ribityllumazine synthase (181 aa).

Residues Tyr30, Ala61–Glu63, and Cys87–Ile89 each bind 5-amino-6-(D-ribitylamino)uracil. (2S)-2-hydroxy-3-oxobutyl phosphate is bound at residue Glu92–Thr93. The Proton donor role is filled by His95. Asn120 provides a ligand contact to 5-amino-6-(D-ribitylamino)uracil. Arg134 contacts (2S)-2-hydroxy-3-oxobutyl phosphate.

Belongs to the DMRL synthase family.

The catalysed reaction is (2S)-2-hydroxy-3-oxobutyl phosphate + 5-amino-6-(D-ribitylamino)uracil = 6,7-dimethyl-8-(1-D-ribityl)lumazine + phosphate + 2 H2O + H(+). The protein operates within cofactor biosynthesis; riboflavin biosynthesis; riboflavin from 2-hydroxy-3-oxobutyl phosphate and 5-amino-6-(D-ribitylamino)uracil: step 1/2. Functionally, catalyzes the formation of 6,7-dimethyl-8-ribityllumazine by condensation of 5-amino-6-(D-ribitylamino)uracil with 3,4-dihydroxy-2-butanone 4-phosphate. This is the penultimate step in the biosynthesis of riboflavin. The chain is 6,7-dimethyl-8-ribityllumazine synthase from Beijerinckia indica subsp. indica (strain ATCC 9039 / DSM 1715 / NCIMB 8712).